The sequence spans 177 residues: Large ribosomal subunit protein uL6 (177 aa).

Belongs to the universal ribosomal protein uL6 family. Part of the 50S ribosomal subunit.

In terms of biological role, this protein binds to the 23S rRNA, and is important in its secondary structure. It is located near the subunit interface in the base of the L7/L12 stalk, and near the tRNA binding site of the peptidyltransferase center. In Rhodopseudomonas palustris (strain BisA53), this protein is Large ribosomal subunit protein uL6.